Reading from the N-terminus, the 125-residue chain is Large ribosomal subunit protein bL20 (125 aa).

It belongs to the bacterial ribosomal protein bL20 family.

Its function is as follows. Binds directly to 23S ribosomal RNA and is necessary for the in vitro assembly process of the 50S ribosomal subunit. It is not involved in the protein synthesizing functions of that subunit. This Methylobacterium radiotolerans (strain ATCC 27329 / DSM 1819 / JCM 2831 / NBRC 15690 / NCIMB 10815 / 0-1) protein is Large ribosomal subunit protein bL20.